Reading from the N-terminus, the 551-residue chain is MKKVLNKYSRRLTEDKSQGASQAMLYGTEMNDADMHKPQIGIGSVWYEGNTCNMHLNQLAQFVKDSVEKENLKGMRFNTIGVSDGISMGTDGMSYSLQSRDLIADSIETVMSAHWYDGLVSIPGCDKNMPGCMMALGRLNRPGFVIYGGTIQAGVMRGKPIDIVTAFQSYGACLSGQITEQERQETIKKACPGAGACGGMYTANTMACAIEALGMSLPFSSSTSATSVEKVQECDKAGETIKNLLELDIKPRDIMTRKAFENAMVLITVMGGSTNAVLHLLAMASSVDVDLSIDDFQEIANKTPVLADFKPSGKYVKANLHAIGGTPAVMKMLLKAGMLHGDCLTVTGKTLAENLENVADLPEDNTIIHKLDNPIKKTGHLQILKGNVAPEGSVAKITGKEGEIFEGVANVFDSEEEMVAAVETGKVKKGDVIVIRYEGPKGGPGMPEMLKPTSLIMGAGLGQDVALITDGRFSGGSHGFIVGHITPEAYEGGMIALLENGDKITIDAINNVINVDLSDQEIAQRKSKWRASKQKASRGTLKKYIKTVSSA.

Cys52 contributes to the [2Fe-2S] cluster binding site. Residue Asp84 coordinates Mg(2+). Cys125 is a binding site for [2Fe-2S] cluster. Residues Asp126 and Lys127 each contribute to the Mg(2+) site. Position 127 is an N6-carboxylysine (Lys127). A [2Fe-2S] cluster-binding site is contributed by Cys197. Residue Glu448 participates in Mg(2+) binding. Ser474 functions as the Proton acceptor in the catalytic mechanism.

Belongs to the IlvD/Edd family. Homodimer. [2Fe-2S] cluster is required as a cofactor. It depends on Mg(2+) as a cofactor.

The enzyme catalyses (2R)-2,3-dihydroxy-3-methylbutanoate = 3-methyl-2-oxobutanoate + H2O. The catalysed reaction is (2R,3R)-2,3-dihydroxy-3-methylpentanoate = (S)-3-methyl-2-oxopentanoate + H2O. It participates in amino-acid biosynthesis; L-isoleucine biosynthesis; L-isoleucine from 2-oxobutanoate: step 3/4. Its pathway is amino-acid biosynthesis; L-valine biosynthesis; L-valine from pyruvate: step 3/4. Its function is as follows. Functions in the biosynthesis of branched-chain amino acids. Catalyzes the dehydration of (2R,3R)-2,3-dihydroxy-3-methylpentanoate (2,3-dihydroxy-3-methylvalerate) into 2-oxo-3-methylpentanoate (2-oxo-3-methylvalerate) and of (2R)-2,3-dihydroxy-3-methylbutanoate (2,3-dihydroxyisovalerate) into 2-oxo-3-methylbutanoate (2-oxoisovalerate), the penultimate precursor to L-isoleucine and L-valine, respectively. The sequence is that of Dihydroxy-acid dehydratase from Francisella tularensis subsp. tularensis (strain FSC 198).